The primary structure comprises 208 residues: Uracil phosphoribosyltransferase (208 aa).

5-phospho-alpha-D-ribose 1-diphosphate contacts are provided by residues Arg78, Arg103, and 130–138 (DPMLATGGS). Uracil is bound by residues Ile193 and 198 to 200 (GDA). Residue Asp199 participates in 5-phospho-alpha-D-ribose 1-diphosphate binding.

Belongs to the UPRTase family. Requires Mg(2+) as cofactor.

It catalyses the reaction UMP + diphosphate = 5-phospho-alpha-D-ribose 1-diphosphate + uracil. It functions in the pathway pyrimidine metabolism; UMP biosynthesis via salvage pathway; UMP from uracil: step 1/1. Allosterically activated by GTP. Its function is as follows. Catalyzes the conversion of uracil and 5-phospho-alpha-D-ribose 1-diphosphate (PRPP) to UMP and diphosphate. The protein is Uracil phosphoribosyltransferase of Shewanella sp. (strain ANA-3).